Consider the following 688-residue polypeptide: Sialic acid-binding Ig-like lectin 10 (688 aa).

The signal sequence occupies residues 1–17; that stretch reads MSLLLFLLSFLLDGPQG. Residues 18–543 are Extracellular-facing; sequence QMESYFLQVQ…DKDSATAFSK (526 aa). The region spanning 26–138 is the Ig-like V-type domain; it reads VQRIVKAQEG…SFKEEFRLQV (113 aa). Disulfide bonds link C37–C172, C42–C102, and C163–C214. Position 120 (R120) interacts with N-acetylneuraminate. One can recognise an Ig-like C2-type 1 domain in the interval 145–228; it reads PDIFIPEVLE…SRMSTQRTVR (84 aa). 2 N-linked (GlcNAc...) asparagine glycosylation sites follow: N195 and N246. Ig-like C2-type domains lie at 250 to 334 and 339 to 436; these read PDLH…LDLS and PQDL…LSLS. Intrachain disulfides connect C271-C318 and C375-C420. The helical transmembrane segment at 544–564 threads the bilayer; the sequence is GAVLGFGITALLALCLIVVIV. Over 565–688 the chain is Cytoplasmic; the sequence is KTLQKKGTQE…YSDYTEVRVH (124 aa). The ITIM motif 1 signature appears at 588–593; the sequence is LDYINV. Positions 602–656 are disordered; that stretch reads RNWKAEPDAPSRSSPLDTHFPKPKKKQKDPHFTYPGCPDPTSSSQVPVSENNPEE. Residues 641 to 652 show a composition bias toward polar residues; it reads PTSSSQVPVSEN. The ITIM motif 2 signature appears at 657 to 662; that stretch reads LHYAAL. A Phosphotyrosine modification is found at Y659.

It belongs to the immunoglobulin superfamily. SIGLEC (sialic acid binding Ig-like lectin) family. Interacts with PTPN6/SHP-1 upon phosphorylation. Interacts with NCF1. Interacts with CD24; the probable CD24:SIGLEC10 complex is proposed to inhibit HGMB1-mediated tissue damage immune response. Interacts with HMGB1; the interaction is dependent on CD24. Associates with membrane IgM on the B cell surface. Interacts with RIGI, CBL and PTPN11. Phosphorylation of Tyr-659 is involved in binding to PTPN6. In terms of tissue distribution, expressed in B cells with high levels in pre-B cells and B1a cells of the peritoneal cavity.

It is found in the cell membrane. Its function is as follows. Putative adhesion molecule that mediates sialic-acid dependent binding to cells. Preferentially binds to alpha-2,3- or alpha-2,6-linked sialic acid. The sialic acid recognition site may be masked by cis interactions with sialic acids on the same cell surface. In the immune response, seems to act as an inhibitory receptor upon ligand induced tyrosine phosphorylation by recruiting cytoplasmic phosphatase(s) via their SH2 domain(s) that block signal transduction through dephosphorylation of signaling molecules. Involved in negative regulation of B-cell antigen receptor signaling and specifically acts on B1 cells to inhibit Ca(2+) signaling, cellular expansion and antibody secretion. The inhibition of B cell activation is dependent on PTPN6/SHP-1. In association with CD24 may be involved in the selective suppression of the immune response to danger-associated molecular patterns (DAMPs) such as HMGB1, HSP70 and HSP90. In association with CD24 may regulate the immune repsonse of natural killer (NK) cells. Plays a role in the control of autoimmunity. During initiation of adaptive immune responses by CD8-alpha(+) dendritic cells inhibits cross-presentation by impairing the formation of MHC class I-peptide complexes. The function seems to implicate recruitment of PTPN6/SHP-1, which dephosphorylates NCF1 of the NADPH oxidase complex consequently promoting phagosomal acidification. In terms of biological role, (Microbial infection) During infection by RNA viruses inhibits RIG-I signaling in macrophages by promoting its CBL-dependent ubiquitination and degradation via PTPN11/SHP-2. This is Sialic acid-binding Ig-like lectin 10 (Siglec10) from Mus musculus (Mouse).